The sequence spans 76 residues: DNA gyrase inhibitor YacG (76 aa).

Zn(2+) contacts are provided by cysteine 7, cysteine 10, cysteine 26, and cysteine 30.

Belongs to the DNA gyrase inhibitor YacG family. Interacts with GyrB. Requires Zn(2+) as cofactor.

Functionally, inhibits all the catalytic activities of DNA gyrase by preventing its interaction with DNA. Acts by binding directly to the C-terminal domain of GyrB, which probably disrupts DNA binding by the gyrase. The chain is DNA gyrase inhibitor YacG from Pseudoalteromonas translucida (strain TAC 125).